Here is a 148-residue protein sequence, read N- to C-terminus: Putative nickel-responsive regulator (148 aa).

Residues histidine 88, histidine 99, histidine 101, and cysteine 107 each coordinate Ni(2+).

This sequence belongs to the transcriptional regulatory CopG/NikR family. Ni(2+) is required as a cofactor.

Functionally, transcriptional regulator. This is Putative nickel-responsive regulator from Helicobacter acinonychis (strain Sheeba).